A 56-amino-acid chain; its full sequence is Large ribosomal subunit protein bL32 (56 aa).

Residues 1–16 (MAVQKSKKSRSMRGMR) show a composition bias toward basic residues. The tract at residues 1-33 (MAVQKSKKSRSMRGMRRSHDALTTSAVSVDATS) is disordered. The span at 21–33 (ALTTSAVSVDATS) shows a compositional bias: polar residues.

The protein belongs to the bacterial ribosomal protein bL32 family.

This chain is Large ribosomal subunit protein bL32, found in Aliivibrio fischeri (strain ATCC 700601 / ES114) (Vibrio fischeri).